The primary structure comprises 3120 residues: DNA-directed RNA polymerase subunit beta'' (3120 aa).

Positions 323, 396, 403, and 406 each coordinate Zn(2+). Positions 595 to 1130 (FIGEGKQNVL…LKTLVLKKWF (536 aa)) are insert-1. Residues 1796 to 2346 (KGHLVAYARP…NGIIQAKSLL (551 aa)) are insert-2. The interval 2422 to 2610 (NSNFLENTHF…PEGEGEKDMT (189 aa)) is insert-3. An insert-4 region spans residues 2726 to 2801 (FSKKRWKKSI…KQNQTIILAL (76 aa)). Residues 2856–2996 (ASKMSEYMFS…LNQLLSNNLD (141 aa)) are insert-5. The interval 2926 to 2956 (EGIDSSKIPSSNIPEGKVTQNNKRKSTRKNV) is disordered. Polar residues predominate over residues 2932–2946 (KIPSSNIPEGKVTQN).

This sequence belongs to the RNA polymerase beta' chain family. RpoC2 subfamily. In plastids the minimal PEP RNA polymerase catalytic core is composed of four subunits: alpha, beta, beta', and beta''. When a (nuclear-encoded) sigma factor is associated with the core the holoenzyme is formed, which can initiate transcription. Zn(2+) is required as a cofactor.

The protein localises to the plastid. It is found in the chloroplast. The catalysed reaction is RNA(n) + a ribonucleoside 5'-triphosphate = RNA(n+1) + diphosphate. Its function is as follows. DNA-dependent RNA polymerase catalyzes the transcription of DNA into RNA using the four ribonucleoside triphosphates as substrates. The polypeptide is DNA-directed RNA polymerase subunit beta'' (Chlamydomonas reinhardtii (Chlamydomonas smithii)).